Reading from the N-terminus, the 452-residue chain is UDP-N-acetylmuramoylalanine--D-glutamate ligase (452 aa).

115–121 contributes to the ATP binding site; that stretch reads GTNGKTT.

It belongs to the MurCDEF family.

It localises to the cytoplasm. The enzyme catalyses UDP-N-acetyl-alpha-D-muramoyl-L-alanine + D-glutamate + ATP = UDP-N-acetyl-alpha-D-muramoyl-L-alanyl-D-glutamate + ADP + phosphate + H(+). It functions in the pathway cell wall biogenesis; peptidoglycan biosynthesis. Functionally, cell wall formation. Catalyzes the addition of glutamate to the nucleotide precursor UDP-N-acetylmuramoyl-L-alanine (UMA). The sequence is that of UDP-N-acetylmuramoylalanine--D-glutamate ligase from Geobacter sp. (strain M21).